The primary structure comprises 601 residues: ATP-dependent lipid A-core flippase (601 aa).

Helical transmembrane passes span 35–55, 77–97, 150–170, 173–193, 263–283, and 286–306; these read FAVA…LAFL, LAII…AILM, AVTS…VIFY, WQLA…IAKF, MEFL…YQVI, and SSTP…YEPV. In terms of domain architecture, ABC transmembrane type-1 spans 36–318; it reads AVAMVCMLIA…LTNVNNTIQQ (283 aa). Positions 352 to 585 constitute an ABC transporter domain; the sequence is IEIRNISFAY…RGEYYKLHQL (234 aa). 384–391 contacts ATP; that stretch reads GMSGGGKT.

This sequence belongs to the ABC transporter superfamily. Lipid exporter (TC 3.A.1.106) family. Homodimer.

The protein resides in the cell inner membrane. It carries out the reaction ATP + H2O + lipid A-core oligosaccharideSide 1 = ADP + phosphate + lipid A-core oligosaccharideSide 2.. Its function is as follows. Involved in lipopolysaccharide (LPS) biosynthesis. Translocates lipid A-core from the inner to the outer leaflet of the inner membrane. Transmembrane domains (TMD) form a pore in the inner membrane and the ATP-binding domain (NBD) is responsible for energy generation. This is ATP-dependent lipid A-core flippase from Syntrophus aciditrophicus (strain SB).